The sequence spans 146 residues: Large ribosomal subunit protein uL15 (146 aa).

The disordered stretch occupies residues 1–51 (MKLHELQPAAGSRKVRNRVGRGTSSGNGKTSGRGQKGQKARSGGGVRLGFE). Composition is skewed to gly residues over residues 23–35 (TSSG…GRGQ) and 42–51 (SGGGVRLGFE).

Belongs to the universal ribosomal protein uL15 family. In terms of assembly, part of the 50S ribosomal subunit.

Binds to the 23S rRNA. The protein is Large ribosomal subunit protein uL15 of Streptococcus sanguinis (strain SK36).